The chain runs to 114 residues: MWKALSQLLKKQKNQSPSDEDYIQIPELEVKVLGMLHSINIDLVNVIAQAEKSKEFIGQIEGIWHSIANQFYSLAQGFENEDINKLSADLDHAAATWEAVANKAKEFVTNSYQG.

This is an uncharacterized protein from Bacillus subtilis (strain 168).